The chain runs to 987 residues: ATP-dependent 6-phosphofructokinase subunit alpha (987 aa).

The tract at residues Met1–Ile602 is N-terminal catalytic PFK domain 1. Residues Gly237, Arg300 to Cys301, and Gly330 to Ser333 contribute to the ATP site. Asp331 serves as a coordination point for Mg(2+). Beta-D-fructose 6-phosphate-binding positions include Ser376 to Asp378, Arg413, Met420 to Arg422, Glu477, Arg504, and His510 to Arg513. Residue Asp378 is the Proton acceptor of the active site. The segment at Tyr603–Leu616 is interdomain linker. The segment at Asn617–Tyr987 is C-terminal regulatory PFK domain 2. Residues Arg686, Thr743–Asn747, Arg781, Gln788–Gly790, Glu848, Arg874, His880–Gln883, and Arg958 contribute to the beta-D-fructose 2,6-bisphosphate site.

It belongs to the phosphofructokinase type A (PFKA) family. ATP-dependent PFK group I subfamily. Eukaryotic two domain clade 'E' sub-subfamily. In terms of assembly, heterooctamer of 4 alpha and 4 beta chains. It depends on Mg(2+) as a cofactor.

The protein localises to the cytoplasm. It carries out the reaction beta-D-fructose 6-phosphate + ATP = beta-D-fructose 1,6-bisphosphate + ADP + H(+). It participates in carbohydrate degradation; glycolysis; D-glyceraldehyde 3-phosphate and glycerone phosphate from D-glucose: step 3/4. Allosterically activated by ADP, AMP, or fructose 2,6-bisphosphate, and allosterically inhibited by ATP or citrate. Functionally, catalyzes the phosphorylation of D-fructose 6-phosphate to fructose 1,6-bisphosphate by ATP, the first committing step of glycolysis. This Candida albicans (Yeast) protein is ATP-dependent 6-phosphofructokinase subunit alpha (PFK1).